A 308-amino-acid polypeptide reads, in one-letter code: Pantothenate kinase (308 aa).

91 to 98 (GSVAVGKS) serves as a coordination point for ATP.

The protein belongs to the prokaryotic pantothenate kinase family.

The protein resides in the cytoplasm. The enzyme catalyses (R)-pantothenate + ATP = (R)-4'-phosphopantothenate + ADP + H(+). Its pathway is cofactor biosynthesis; coenzyme A biosynthesis; CoA from (R)-pantothenate: step 1/5. The chain is Pantothenate kinase from Lacticaseibacillus paracasei (strain ATCC 334 / BCRC 17002 / CCUG 31169 / CIP 107868 / KCTC 3260 / NRRL B-441) (Lactobacillus paracasei).